Reading from the N-terminus, the 184-residue chain is RNA 2',3'-cyclic phosphodiesterase (184 aa).

Histidine 40 acts as the Proton donor in catalysis. 2 consecutive short sequence motifs (HXTX) follow at residues 40–43 (HITL) and 125–128 (HITL). Histidine 125 functions as the Proton acceptor in the catalytic mechanism.

This sequence belongs to the 2H phosphoesterase superfamily. ThpR family.

It catalyses the reaction a 3'-end 2',3'-cyclophospho-ribonucleotide-RNA + H2O = a 3'-end 2'-phospho-ribonucleotide-RNA + H(+). In terms of biological role, hydrolyzes RNA 2',3'-cyclic phosphodiester to an RNA 2'-phosphomonoester. In vitro, ligates 5' and 3' half-tRNA molecules with 2',3'-cyclic phosphate and 5'-hydroxyl termini, respectively, to the product containing the 2'-5' phosphodiester linkage. Ligase activity requires GTP, but GTP hydrolysis is not required for the reaction, which is reversible. Ligase activity is weak compared to the phosphodiesterase activity. This Pyrococcus furiosus (strain ATCC 43587 / DSM 3638 / JCM 8422 / Vc1) protein is RNA 2',3'-cyclic phosphodiesterase.